The primary structure comprises 264 residues: MESGFTSKDTYLSHFNPRDYLEKYYKFGSRHSAESQILKHLLKNLFKIFCLDGVKGDLLIDIGSGPTIYQLLSACESFKEIVVTDYSDQNLQELEKWLKKEPEAFDWSPVVTYVCDLEGNRVKGPEKEEKLRQAVKQVLKCDVTQSQPLGAVPLPPADCVLSTLCLDAACPDLPTYCRALRNLGSLLKPGGFLVIMDALKSSYYMIGEQKFSSLPLGREAVEAAVKEAGYTIEWFEVISQSYSSTMANNEGLFSLVARKLSRPL.

R18 is subject to Citrulline; alternate. Positions 20 and 25 each coordinate S-adenosyl-L-methionine. At K39 the chain carries N6-acetyllysine. S-adenosyl-L-methionine-binding residues include G63, Y69, D85, and N90. R132 carries the citrulline; alternate modification. Residues 142–143 (DV) and T163 contribute to the S-adenosyl-L-methionine site. R181 is modified (citrulline; alternate). 2 residues coordinate nicotinamide: D197 and S213.

This sequence belongs to the class I-like SAM-binding methyltransferase superfamily. NNMT/PNMT/TEMT family. As to quaternary structure, monomer. Deiminated by PADI1 and PADI2. Predominantly expressed in the liver. A lower expression is seen in the kidney, lung, skeletal muscle, placenta and heart. Not detected in the brain or pancreas.

The protein resides in the cytoplasm. The catalysed reaction is nicotinamide + S-adenosyl-L-methionine = 1-methylnicotinamide + S-adenosyl-L-homocysteine. The protein operates within cofactor metabolism. It participates in amino-acid degradation. Its activity is regulated as follows. Inactivated by deimination on Arg-132. Catalyzes the N-methylation of nicotinamide using the universal methyl donor S-adenosyl-L-methionine to form N1-methylnicotinamide and S-adenosyl-L-homocysteine, a predominant nicotinamide/vitamin B3 clearance pathway. Plays a central role in regulating cellular methylation potential, by consuming S-adenosyl-L-methionine and limiting its availability for other methyltransferases. Actively mediates genome-wide epigenetic and transcriptional changes through hypomethylation of repressive chromatin marks, such as H3K27me3. In a developmental context, contributes to low levels of the repressive histone marks that characterize pluripotent embryonic stem cell pre-implantation state. Acts as a metabolic regulator primarily on white adipose tissue energy expenditure as well as hepatic gluconeogenesis and cholesterol biosynthesis. In white adipocytes, regulates polyamine flux by consuming S-adenosyl-L-methionine which provides for propylamine group in polyamine biosynthesis, whereas by consuming nicotinamide controls NAD(+) levels through the salvage pathway. Via its product N1-methylnicotinamide regulates protein acetylation in hepatocytes, by repressing the ubiquitination and increasing the stability of SIRT1 deacetylase. Can also N-methylate other pyridines structurally related to nicotinamide and play a role in xenobiotic detoxification. This Homo sapiens (Human) protein is Nicotinamide N-methyltransferase.